The following is a 459-amino-acid chain: Chromosomal replication initiator protein DnaA (459 aa).

A domain I, interacts with DnaA modulators region spans residues 1–74 (MMEMPIDNLW…ANVVQSILGH (74 aa)). The domain II stretch occupies residues 74-117 (HPVEIYITVAKGEEFEEIGGGGEWELPTTNIINETPNQNRQPNT). The interval 118-334 (ELNAKYVFSR…GALTRALAYI (217 aa)) is domain III, AAA+ region. 4 residues coordinate ATP: glycine 162, glycine 164, lysine 165, and threonine 166. The tract at residues 335–459 (SIWGLPMTVA…IKMNSRSRKP (125 aa)) is domain IV, binds dsDNA.

Belongs to the DnaA family. As to quaternary structure, oligomerizes as a right-handed, spiral filament on DNA at oriC.

Its subcellular location is the cytoplasm. In terms of biological role, plays an essential role in the initiation and regulation of chromosomal replication. ATP-DnaA binds to the origin of replication (oriC) to initiate formation of the DNA replication initiation complex once per cell cycle. Binds the DnaA box (a 9 base pair repeat at the origin) and separates the double-stranded (ds)DNA. Forms a right-handed helical filament on oriC DNA; dsDNA binds to the exterior of the filament while single-stranded (ss)DNA is stabiized in the filament's interior. The ATP-DnaA-oriC complex binds and stabilizes one strand of the AT-rich DNA unwinding element (DUE), permitting loading of DNA polymerase. After initiation quickly degrades to an ADP-DnaA complex that is not apt for DNA replication. Binds acidic phospholipids. This Nostoc sp. (strain PCC 7120 / SAG 25.82 / UTEX 2576) protein is Chromosomal replication initiator protein DnaA.